A 421-amino-acid chain; its full sequence is Na(+)/H(+) antiporter NhaA 1 (421 aa).

Helical transmembrane passes span 48-68 (SSGL…NSPW), 93-113 (LYWW…GLEI), 129-149 (SLAL…YTLV), 157-177 (AGWG…LALL), 187-207 (VLLA…IALF), 215-235 (LALG…AAGV), 253-273 (LASG…IPLG), 299-319 (FLIL…GGSL), 326-346 (VVLG…WLAV), 364-384 (GLGL…GLAF), and 392-412 (AAKL…ITVL).

The protein belongs to the NhaA Na(+)/H(+) (TC 2.A.33) antiporter family.

The protein resides in the cell membrane. The catalysed reaction is Na(+)(in) + 2 H(+)(out) = Na(+)(out) + 2 H(+)(in). In terms of biological role, na(+)/H(+) antiporter that extrudes sodium in exchange for external protons. The sequence is that of Na(+)/H(+) antiporter NhaA 1 from Deinococcus geothermalis (strain DSM 11300 / CIP 105573 / AG-3a).